The following is a 196-amino-acid chain: Protein GrpE (196 aa).

The disordered stretch occupies residues 1-40 (MSSKEQKTPEGQAPEEIIMDQHEEVEAVEPNDSAEQVDPR).

This sequence belongs to the GrpE family. As to quaternary structure, homodimer.

It localises to the cytoplasm. In terms of biological role, participates actively in the response to hyperosmotic and heat shock by preventing the aggregation of stress-denatured proteins, in association with DnaK and GrpE. It is the nucleotide exchange factor for DnaK and may function as a thermosensor. Unfolded proteins bind initially to DnaJ; upon interaction with the DnaJ-bound protein, DnaK hydrolyzes its bound ATP, resulting in the formation of a stable complex. GrpE releases ADP from DnaK; ATP binding to DnaK triggers the release of the substrate protein, thus completing the reaction cycle. Several rounds of ATP-dependent interactions between DnaJ, DnaK and GrpE are required for fully efficient folding. The sequence is that of Protein GrpE from Salmonella gallinarum (strain 287/91 / NCTC 13346).